Here is a 148-residue protein sequence, read N- to C-terminus: Nucleoside diphosphate kinase (148 aa).

Residues Lys9, Phe57, Arg85, Thr91, Arg102, and Asn112 each coordinate ATP. His115 functions as the Pros-phosphohistidine intermediate in the catalytic mechanism.

The protein belongs to the NDK family. In terms of assembly, homotetramer. Requires Mg(2+) as cofactor.

It is found in the cytoplasm. The enzyme catalyses a 2'-deoxyribonucleoside 5'-diphosphate + ATP = a 2'-deoxyribonucleoside 5'-triphosphate + ADP. It carries out the reaction a ribonucleoside 5'-diphosphate + ATP = a ribonucleoside 5'-triphosphate + ADP. In terms of biological role, major role in the synthesis of nucleoside triphosphates other than ATP. The ATP gamma phosphate is transferred to the NDP beta phosphate via a ping-pong mechanism, using a phosphorylated active-site intermediate. This is Nucleoside diphosphate kinase from Macrococcus caseolyticus (strain JCSC5402) (Macrococcoides caseolyticum).